A 395-amino-acid polypeptide reads, in one-letter code: Flap endonuclease 1 (395 aa).

The N-domain stretch occupies residues 1–104 (MGIKHLFQVI…GELAKRTARK (104 aa)). Position 34 (Asp-34) interacts with Mg(2+). Positions 47 and 70 each coordinate DNA. Asp-86, Glu-158, Glu-160, Asp-179, and Asp-181 together coordinate Mg(2+). The interval 122–253 (EIEKFSRRTV…NTALKLIREH (132 aa)) is I-domain. Glu-158 is a binding site for DNA. DNA contacts are provided by Gly-231 and Asp-233. Residue Asp-233 coordinates Mg(2+). The segment at 341-349 (QQSRLEGFF) is interaction with PCNA. A compositionally biased stretch (basic and acidic residues) spans 356–389 (DAEKASLKRKHDEKLQEQKKRKKEEAKAKKEAKA). Residues 356 to 395 (DAEKASLKRKHDEKLQEQKKRKKEEAKAKKEAKAKPRGAA) form a disordered region.

This sequence belongs to the XPG/RAD2 endonuclease family. FEN1 subfamily. Interacts with PCNA. Three molecules of fen1 bind to one PCNA trimer with each molecule binding to one PCNA monomer. PCNA stimulates the nuclease activity without altering cleavage specificity. The cofactor is Mg(2+). Phosphorylated. Phosphorylation upon DNA damage induces relocalization to the nuclear plasma.

The protein resides in the nucleus. The protein localises to the nucleolus. Its subcellular location is the nucleoplasm. It localises to the mitochondrion. Functionally, structure-specific nuclease with 5'-flap endonuclease and 5'-3' exonuclease activities involved in DNA replication and repair. During DNA replication, cleaves the 5'-overhanging flap structure that is generated by displacement synthesis when DNA polymerase encounters the 5'-end of a downstream Okazaki fragment. It enters the flap from the 5'-end and then tracks to cleave the flap base, leaving a nick for ligation. Also involved in the long patch base excision repair (LP-BER) pathway, by cleaving within the apurinic/apyrimidinic (AP) site-terminated flap. Acts as a genome stabilization factor that prevents flaps from equilibrating into structures that lead to duplications and deletions. Also possesses 5'-3' exonuclease activity on nicked or gapped double-stranded DNA, and exhibits RNase H activity. Also involved in replication and repair of rDNA and in repairing mitochondrial DNA. This Aspergillus clavatus (strain ATCC 1007 / CBS 513.65 / DSM 816 / NCTC 3887 / NRRL 1 / QM 1276 / 107) protein is Flap endonuclease 1 (fen1).